Reading from the N-terminus, the 476-residue chain is MSIRTPPRLLELAGRSLLRDQALAMSTLEELPTELFPPLFMEAFSRRRCEALKLMVQAWPFRRLPLRPLIKMPCLEAFQAVLDGLDALLTQGVHPRRWKLQVLDLQDVCENFWMVWSEAMARGCFLNAKRNKTPVQDCPRMRGQQPLTVFVELWLKNRTLDEYLTCLLLWVKQRKDLLHLCCKKLKILGMPFRNIRSILKMVNLDCIQEVEVNCKWVLPILTQFTPYLGHMRNLQKLVLSHMDVSRYVSPEQKKEIVTQFTTQFLKLCCLQKLSMNSVSFLEGHLDQLLSCLKTSLKVLTITNCVLLESDLKHLSQCPSISQLKTLDLSGIRLTNYSLVPLQILLEKVAATLEYLDLDDCGIIDSQVNAILPALSRCFELNTFSFCGNPISMATLENLLSHTIILKNLCVELYPAPRESYDADGTLCWSRFAQIRAELMKRVRDLRHPKRILFCTDCCPDCGNRSFYDLEADQCCC.

An LRR 1; degenerate repeat occupies 97–124; it reads RWKLQVLDLQDVCENFWMVWSEAMARGC. Residues 179-203 form an LRR 2; degenerate repeat; that stretch reads HLCCKKLKILGMPFRNIRSILKMVN. An LRR 3; degenerate repeat occupies 204 to 230; the sequence is LDCIQEVEVNCKWVLPILTQFTPYLGH. The LRR 4; degenerate repeat unit spans residues 231–266; the sequence is MRNLQKLVLSHMDVSRYVSPEQKKEIVTQFTTQFLK. LRR repeat units lie at residues 267–292, 293–324, 325–345, 349–376, and 377–401; these read LCCL…LSCL, KTSL…SQLK, TLDL…QILL, AATL…ALSR, and CFEL…LLSH.

The protein belongs to the PRAME family. As to quaternary structure, component of a CRL2 E3 ubiquitin-protein ligase complex, also named ECS (Elongin BC-CUL2/5-SOCS-box protein) complex, composed of CUL2, Elongin BC (ELOB and ELOC), RBX1 and substrate-specific adapter PRAMEF6.

It functions in the pathway protein modification; protein ubiquitination. Its function is as follows. Substrate-recognition component of a Cul2-RING (CRL2) E3 ubiquitin-protein ligase complex, which mediates ubiquitination of target proteins, leading to their degradation. The CRL2(PRAMEF6) complex mediates ubiquitination and degradation of truncated MSRB1/SEPX1 selenoproteins produced by failed UGA/Sec decoding. The sequence is that of PRAME family member 6 from Homo sapiens (Human).